A 40-amino-acid chain; its full sequence is Dolichyl-diphosphooligosaccharide--protein glycosyltransferase subunit 4 (40 aa).

Residues 1–4 lie on the Lumenal side of the membrane; sequence MITD. Residues 5-25 form a helical membrane-spanning segment; sequence VQLAIFSNVLGVFLFLLVVAY. Residues 26 to 40 are Cytoplasmic-facing; sequence HYINANTGKSSIKNK.

This sequence belongs to the OST4 family. In terms of assembly, component of the oligosaccharyltransferase (OST) complex.

The protein resides in the endoplasmic reticulum membrane. Functionally, subunit of the oligosaccharyl transferase (OST) complex that catalyzes the initial transfer of a defined glycan (Glc(3)Man(9)GlcNAc(2) in eukaryotes) from the lipid carrier dolichol-pyrophosphate to an asparagine residue within an Asn-X-Ser/Thr consensus motif in nascent polypeptide chains, the first step in protein N-glycosylation. N-glycosylation occurs cotranslationally and the complex associates with the Sec61 complex at the channel-forming translocon complex that mediates protein translocation across the endoplasmic reticulum (ER). All subunits are required for a maximal enzyme activity. The polypeptide is Dolichyl-diphosphooligosaccharide--protein glycosyltransferase subunit 4 (Drosophila mojavensis (Fruit fly)).